The chain runs to 328 residues: uncharacterized protein (328 aa).

Coiled-coil stretches lie at residues 67–190 (FKEQ…VLEE) and 223–251 (MAQR…DNMM).

This is an uncharacterized protein from Mus musculus (Mouse).